We begin with the raw amino-acid sequence, 156 residues long: Mediator of RNA polymerase II transcription subunit 28 (156 aa).

The segment at 1–38 (MDYQQKPPQSSDPSPSPPDRPPGIRSPETPSNNQNNDI) is disordered. A coiled-coil region spans residues 104 to 156 (PSRAESLKKDIAVMEEELKTKDELIKKHMRLFQESQKLVKEQIEKHRDELEKV).

Belongs to the Mediator complex subunit 28 family. Dimers. Component of the Mediator complex. Interacts with GEBPL.

The protein resides in the nucleus. Its function is as follows. Component of the Mediator complex, a coactivator involved in the regulated transcription of nearly all RNA polymerase II-dependent genes. Mediator functions as a bridge to convey information from gene-specific regulatory proteins to the basal RNA polymerase II transcription machinery. The Mediator complex, having a compact conformation in its free form, is recruited to promoters by direct interactions with regulatory proteins and serves for the assembly of a functional pre-initiation complex with RNA polymerase II and the general transcription factors. The protein is Mediator of RNA polymerase II transcription subunit 28 of Arabidopsis thaliana (Mouse-ear cress).